Here is a 544-residue protein sequence, read N- to C-terminus: Membrane protein insertase YidC (544 aa).

Residues 4–24 traverse the membrane as a helical segment; the sequence is KALLALVLSAAVLLIYQIFIY. Residues 44-78 are disordered; sequence NPAAPVSPQTPADEPSSGSAANPETAAALPVDGTE. Transmembrane regions (helical) follow at residues 363-383, 434-454, and 508-528; these read NYGI…WPLG, LPMI…LYAI, and PVIF…YWLF.

It belongs to the OXA1/ALB3/YidC family. Type 1 subfamily. As to quaternary structure, interacts with the Sec translocase complex via SecD. Specifically interacts with transmembrane segments of nascent integral membrane proteins during membrane integration.

The protein localises to the cell inner membrane. Its function is as follows. Required for the insertion and/or proper folding and/or complex formation of integral membrane proteins into the membrane. Involved in integration of membrane proteins that insert both dependently and independently of the Sec translocase complex, as well as at least some lipoproteins. Aids folding of multispanning membrane proteins. This Syntrophus aciditrophicus (strain SB) protein is Membrane protein insertase YidC.